The primary structure comprises 256 residues: Floral homeotic protein APETALA 1 (256 aa).

In terms of domain architecture, MADS-box spans 1–61; the sequence is MGRGRVQLKR…GKLFEYSTDS (61 aa). A K-box domain is found at 88 to 178; it reads NTNWSMEYNR…SKQIKEREKV (91 aa). Positions 180 to 206 are disordered; sequence RAQQEQWDQQNHGQNMPPPPPPQEHQI.

In terms of assembly, homodimer capable of binding to CArG-box sequences.

The protein resides in the nucleus. Transcription factor that promotes early floral meristem identity in synergy with LEAFY. Displays a redundant function with CAULIFLOWER in the up-regulation of LEAFY. Required subsequently for the transition of an inflorescence meristem into a floral meristem, and for the normal development of sepals and petals in flowers. Regulates positively B class homeotic proteins. The polypeptide is Floral homeotic protein APETALA 1 (AP1) (Brassica rapa subsp. pekinensis (Chinese cabbage)).